We begin with the raw amino-acid sequence, 231 residues long: Triggering receptor expressed on myeloid cells 1 (231 aa).

A signal peptide spans Met1 to Ala20. Residues Ala21–Asn202 are Extracellular-facing. Residues Glu26–Thr131 enclose the Ig-like V-type domain. Residues Cys41 and Cys110 are joined by a disulfide bond. 2 stretches are compositionally biased toward polar residues: residues Ser134–Lys157 and Thr164–Thr182. Positions Ser134–Thr182 are disordered. Asn188 and Asn191 each carry an N-linked (GlcNAc...) asparagine glycan. Residues Ile203–Ala223 form a helical membrane-spanning segment. At Val224–Pro231 the chain is on the cytoplasmic side.

In terms of assembly, monomer. Homomultimer; when activated. Interacts with TYROBP/DAP12. Interacts with TLR4.

The protein resides in the cell membrane. Functionally, cell surface receptor that plays important roles in innate and adaptive immunity by amplifying inflammatory responses. Upon activation by various ligands such as PGLYRP1, HMGB1 or HSP70, multimerizes and forms a complex with transmembrane adapter TYROBP/DAP12. In turn, initiates a SYK-mediated cascade of tyrosine phosphorylation, activating multiple downstream mediators such as BTK, MAPK1, MAPK3 or phospholipase C-gamma. This cascade promotes the neutrophil- and macrophage-mediated release of pro-inflammatory cytokines and/or chemokines, as well as their migration and thereby amplifies inflammatory responses that are triggered by bacterial and fungal infections. By also promoting the amplification of inflammatory signals that are initially triggered by Toll-like receptor (TLR) and NOD-like receptor engagement, plays a major role in the pathophysiology of acute and chronic inflammatory diseases of different etiologies including septic shock and atherosclerosis. The polypeptide is Triggering receptor expressed on myeloid cells 1 (TREM1) (Pongo abelii (Sumatran orangutan)).